The following is a 159-amino-acid chain: NADH-quinone oxidoreductase subunit I (159 aa).

4Fe-4S ferredoxin-type domains lie at 50–80 (QRRY…IESE) and 90–119 (KRYD…ETHI). The [4Fe-4S] cluster site is built by C60, C63, C66, C70, C99, C102, C105, and C109.

The protein belongs to the complex I 23 kDa subunit family. NDH-1 is composed of 14 different subunits. Subunits NuoA, H, J, K, L, M, N constitute the membrane sector of the complex. Requires [4Fe-4S] cluster as cofactor.

The protein localises to the cell inner membrane. It catalyses the reaction a quinone + NADH + 5 H(+)(in) = a quinol + NAD(+) + 4 H(+)(out). Its function is as follows. NDH-1 shuttles electrons from NADH, via FMN and iron-sulfur (Fe-S) centers, to quinones in the respiratory chain. The immediate electron acceptor for the enzyme in this species is believed to be ubiquinone. Couples the redox reaction to proton translocation (for every two electrons transferred, four hydrogen ions are translocated across the cytoplasmic membrane), and thus conserves the redox energy in a proton gradient. The sequence is that of NADH-quinone oxidoreductase subunit I from Neisseria meningitidis serogroup A / serotype 4A (strain DSM 15465 / Z2491).